Consider the following 240-residue polypeptide: UDP-2,3-diacylglucosamine hydrolase (240 aa).

The Mn(2+) site is built by Asp8, His10, Asp41, Asn79, and His114. 79-80 (NR) serves as a coordination point for substrate. Substrate is bound by residues Asp122, Ser160, Asn164, Lys167, and His195. The Mn(2+) site is built by His195 and His197.

Belongs to the LpxH family. Mn(2+) is required as a cofactor.

The protein localises to the cell inner membrane. It carries out the reaction UDP-2-N,3-O-bis[(3R)-3-hydroxytetradecanoyl]-alpha-D-glucosamine + H2O = 2-N,3-O-bis[(3R)-3-hydroxytetradecanoyl]-alpha-D-glucosaminyl 1-phosphate + UMP + 2 H(+). It participates in glycolipid biosynthesis; lipid IV(A) biosynthesis; lipid IV(A) from (3R)-3-hydroxytetradecanoyl-[acyl-carrier-protein] and UDP-N-acetyl-alpha-D-glucosamine: step 4/6. Its function is as follows. Hydrolyzes the pyrophosphate bond of UDP-2,3-diacylglucosamine to yield 2,3-diacylglucosamine 1-phosphate (lipid X) and UMP by catalyzing the attack of water at the alpha-P atom. Involved in the biosynthesis of lipid A, a phosphorylated glycolipid that anchors the lipopolysaccharide to the outer membrane of the cell. The chain is UDP-2,3-diacylglucosamine hydrolase from Salmonella schwarzengrund (strain CVM19633).